The sequence spans 452 residues: Exodeoxyribonuclease 7 large subunit (452 aa).

It belongs to the XseA family. As to quaternary structure, heterooligomer composed of large and small subunits.

The protein resides in the cytoplasm. It catalyses the reaction Exonucleolytic cleavage in either 5'- to 3'- or 3'- to 5'-direction to yield nucleoside 5'-phosphates.. Bidirectionally degrades single-stranded DNA into large acid-insoluble oligonucleotides, which are then degraded further into small acid-soluble oligonucleotides. The protein is Exodeoxyribonuclease 7 large subunit of Bacillus cereus (strain 03BB102).